A 427-amino-acid polypeptide reads, in one-letter code: Glutamate-1-semialdehyde 2,1-aminomutase (427 aa).

K267 bears the N6-(pyridoxal phosphate)lysine mark.

This sequence belongs to the class-III pyridoxal-phosphate-dependent aminotransferase family. HemL subfamily. As to quaternary structure, homodimer. Requires pyridoxal 5'-phosphate as cofactor.

The protein resides in the cytoplasm. The catalysed reaction is (S)-4-amino-5-oxopentanoate = 5-aminolevulinate. Its pathway is porphyrin-containing compound metabolism; protoporphyrin-IX biosynthesis; 5-aminolevulinate from L-glutamyl-tRNA(Glu): step 2/2. This is Glutamate-1-semialdehyde 2,1-aminomutase from Thermodesulfovibrio yellowstonii (strain ATCC 51303 / DSM 11347 / YP87).